A 2297-amino-acid chain; its full sequence is Serine/threonine-protein kinase WNK2 (2297 aa).

Residues 1 to 10 (MDGDGGRRDV) are compositionally biased toward basic and acidic residues. 2 disordered regions span residues 1-75 (MDGD…QRRV) and 89-183 (ARGR…EDDL). Omega-N-methylarginine occurs at positions 19 and 30. Phosphoserine is present on Ser-45. Residues 92–120 (RPAAPAPAALVAQPGAPGAPADAGPEPVG) are compositionally biased toward low complexity. Basic and acidic residues predominate over residues 142 to 172 (GPREEAAATVRKEDEGAAEAKPEPGRTRRDE). Residues 173-182 (PEEEEDDEDD) show a composition bias toward acidic residues. In terms of domain architecture, Protein kinase spans 195–453 (LKFDIELGRG…IKDLLSHAFF (259 aa)). ATP contacts are provided by residues Ser-205, 275 to 278 (TELM), and Lys-325. Catalysis depends on Asp-342, which acts as the Proton acceptor. Phosphoserine; by autocatalysis is present on residues Ser-352 and Ser-356. Position 560 is a phosphoserine (Ser-560). 8 disordered regions span residues 579 to 630 (AQAG…DSQS), 699 to 751 (FPDP…PVVP), 917 to 1022 (PQMA…PGSQ), 1117 to 1185 (PVQE…ERAS), 1262 to 1297 (SEDT…SQAN), 1323 to 1345 (APEA…ASQG), 1374 to 1480 (SAQS…HEAP), and 1492 to 1586 (PCTP…DSTI). Residues 604–625 (PTSATSLASDSTFDSGQGSTVY) are compositionally biased toward polar residues. Pro residues-rich tracts occupy residues 709 to 740 (VLPP…PTPL) and 939 to 1007 (PPQP…PLQP). A Phosphoserine modification is found at Ser-1150. Residues 1167–1178 (ARKHHRRSTRAR) are compositionally biased toward basic residues. Ser-1262 bears the Phosphoserine mark. Positions 1392–1406 (SKEQPSFLASQQLLS) are enriched in polar residues. A compositionally biased stretch (pro residues) spans 1411-1426 (SNPPGAPPAPLAPSSP). 2 stretches are compositionally biased toward polar residues: residues 1439–1453 (ATST…TASQ) and 1461–1473 (QGLT…SQPL). A compositionally biased stretch (pro residues) spans 1510-1520 (EPLPPPAPEPS). A compositionally biased stretch (low complexity) spans 1526 to 1544 (PQPALGQPAPLLPAAVGAV). Residues 1552–1565 (PSPPLGPTVPPQPP) are compositionally biased toward pro residues. The residue at position 1588 (Ser-1588) is a Phosphoserine. Residues 1621 to 1631 (TLEPLRGDQPR) show a composition bias toward basic and acidic residues. Residues 1621-1865 (TLEPLRGDQP…PVQKQASLPV (245 aa)) are disordered. Residues 1675–1688 (QGTSSSMTAESSPR) are compositionally biased toward polar residues. Ser-1685 bears the Phosphoserine mark. Residues 1721–1731 (ARVEPTDRDGG) are compositionally biased toward basic and acidic residues. Phosphoserine occurs at positions 1736, 1817, 1818, 1862, and 1889. 2 disordered regions span residues 1970-1990 (NVGF…SKSK) and 2011-2031 (TGHL…QASV). Positions 1981 to 1990 (GRRRKTSKSK) are enriched in basic residues. Phosphoserine is present on Ser-2067. Disordered regions lie at residues 2123–2142 (SRSS…QPAL) and 2269–2297 (CCGH…PVRS). Polar residues predominate over residues 2272–2289 (HSTQPRGGQRVGSKTASF).

Belongs to the protein kinase superfamily. Ser/Thr protein kinase family. WNK subfamily. As to quaternary structure, forms a complex with the phosphorylated form of STK39. Requires Mg(2+) as cofactor. In terms of processing, autophosphorylated. Autophosphorylation at Ser-352 and Ser-356 promotes its activity. As to expression, expressed in various cancer cell lines (at protein level). Predominantly expressed in heart, brain, skeletal muscle and colon.

The protein resides in the cytoplasm. Its subcellular location is the cell membrane. The enzyme catalyses L-seryl-[protein] + ATP = O-phospho-L-seryl-[protein] + ADP + H(+). The catalysed reaction is L-threonyl-[protein] + ATP = O-phospho-L-threonyl-[protein] + ADP + H(+). Activation requires autophosphorylation of Ser-356 and, to a lower extent, Ser-352. In terms of biological role, serine/threonine-protein kinase component of the WNK2-SPAK/OSR1 kinase cascade, which plays an important role in the regulation of electrolyte homeostasis, cell signaling, survival, and proliferation. The WNK2-SPAK/OSR1 kinase cascade is composed of WNK2, which mediates phosphorylation and activation of downstream kinases OXSR1/OSR1 and STK39/SPAK. Following activation, OXSR1/OSR1 and STK39/SPAK catalyze phosphorylation of ion cotransporters, regulating their activity. Acts as an activator and inhibitor of sodium-coupled chloride cotransporters and potassium-coupled chloride cotransporters respectively. Activates SLC12A2, SCNN1A, SCNN1B, SCNN1D and SGK1 and inhibits SLC12A5. Negatively regulates the EGF-induced activation of the ERK/MAPK-pathway and the downstream cell cycle progression. Affects MAPK3/MAPK1 activity by modulating the activity of MAP2K1 and this modulation depends on phosphorylation of MAP2K1 by PAK1. WNK2 acts by interfering with the activity of PAK1 by controlling the balance of the activity of upstream regulators of PAK1 activity, RHOA and RAC1, which display reciprocal activity. This is Serine/threonine-protein kinase WNK2 from Homo sapiens (Human).